The following is a 115-amino-acid chain: Waprin-like protein (115 aa).

The signal sequence occupies residues 1–21 (MNRSLLAFAIVLVLLVAGTSS). In terms of domain architecture, WAP spans 23–69 (LFNKSGNCPMRNTVTSCTPRCIGDGECSSNQKCCPNKCGTTSCANSS). Intrachain disulfides connect C30–C56, C39–C60, C43–C55, and C49–C65.

The protein belongs to the venom waprin family. Cys-rich waprin subfamily. Expressed by the venom gland.

The protein localises to the secreted. In terms of biological role, antimicrobial peptides with activity against Gram-positive and Gram-negative bacteria as well as fungi. Recognizes carbohydrates in the microbial cell walls, and induces structural damage to them. Also inhibits microbial serine proteases, as well as mammalian elastases. Carbohydrates that are recognized are LPS, mannan, peptidoglycan, and N-acetl-D-glucosamine. The polypeptide is Waprin-like protein (Tetramorium bicarinatum (Tramp ant)).